A 55-amino-acid polypeptide reads, in one-letter code: Large ribosomal subunit protein bL33 (55 aa).

This sequence belongs to the bacterial ribosomal protein bL33 family.

The sequence is that of Large ribosomal subunit protein bL33 from Methylobacterium sp. (strain 4-46).